An 896-amino-acid chain; its full sequence is Desmocollin-3 (896 aa).

Positions 1–31 are cleaved as a signal peptide; sequence MVVPEFRSPQCRALCTKLLLTLWVFSFVGEA. The propeptide occupies 32–135; the sequence is CKKVTFHVPS…KETVLRRSKR (104 aa). 5 consecutive Cadherin domains span residues 136 to 243, 244 to 355, 356 to 472, 473 to 580, and 581 to 691; these read RWAP…YPLF, TEAI…APTF, RQNT…GPEC, KPPE…EIIQ, and DYIV…TLGK. Residues 136–695 are Extracellular-facing; sequence RWAPIPCSMQ…GITLGKWAIL (560 aa). Asn166 is a glycosylation site (N-linked (GlcNAc...) asparagine). Asn392 and Asn547 each carry an N-linked (GlcNAc...) asparagine glycan. The N-linked (GlcNAc...) (high mannose) asparagine glycan is linked to Asn630. Residues 696 to 716 traverse the membrane as a helical segment; it reads AILLGIALLFSVLLTLVCGVV. The Cytoplasmic segment spans residues 717-896; it reads TARKGKHFPE…LTLAETCTKR (180 aa).

As to quaternary structure, may form homodimers. Interacts with DSG1; there is evidence to suggest that the interaction promotes cell-cell adhesion of keratinocytes. As to expression, expressed in the basal layers of epidermal stratified epithelia from birth (at protein level).

The protein localises to the cell membrane. It is found in the cell junction. The protein resides in the desmosome. Its subcellular location is the cytoplasm. In terms of biological role, a component of desmosome cell-cell junctions which are required for positive regulation of cellular adhesion. Required for cell-cell adhesion in the epidermis, as a result required for the maintenance of the dermal cohesion and the dermal barrier function. Required for cell-cell adhesion of epithelial cell layers surrounding the telogen hair club, as a result plays an important role in telogen hair shaft anchorage. Essential for successful completion of embryo compaction and development beyond the 8-cell stage. This is Desmocollin-3 (Dsc3) from Mus musculus (Mouse).